Consider the following 209-residue polypeptide: Na(+)-translocating NADH-quinone reductase subunit D (209 aa).

The next 5 helical transmembrane spans lie at 42–62 (VVMTIAVTLVTAFSSFFISLI), 66–86 (IPNSVRIIVQMAIIASLVIVV), 95–115 (FEISKQLSVFVGLIITNCIVM), 131–151 (FMDGIGNGLGYGVILVLVGFL), and 178–198 (NGLFLLAPSAFFIIGLLIWAL).

This sequence belongs to the NqrDE/RnfAE family. In terms of assembly, composed of six subunits; NqrA, NqrB, NqrC, NqrD, NqrE and NqrF.

It localises to the cell inner membrane. The enzyme catalyses a ubiquinone + n Na(+)(in) + NADH + H(+) = a ubiquinol + n Na(+)(out) + NAD(+). NQR complex catalyzes the reduction of ubiquinone-1 to ubiquinol by two successive reactions, coupled with the transport of Na(+) ions from the cytoplasm to the periplasm. NqrA to NqrE are probably involved in the second step, the conversion of ubisemiquinone to ubiquinol. This Serratia proteamaculans (strain 568) protein is Na(+)-translocating NADH-quinone reductase subunit D.